The primary structure comprises 141 residues: HTH-type transcriptional repressor NsrR (141 aa).

Residues 2–129 (QLTSFTDYGL…DNYTLADLVE (128 aa)) enclose the HTH rrf2-type domain. Positions 28 to 51 (ISEVTEVYGVSRNHMVKIINQLSR) form a DNA-binding region, H-T-H motif. [2Fe-2S] cluster-binding residues include cysteine 91, cysteine 96, and cysteine 102.

[2Fe-2S] cluster is required as a cofactor.

In terms of biological role, nitric oxide-sensitive repressor of genes involved in protecting the cell against nitrosative stress. May require iron for activity. The polypeptide is HTH-type transcriptional repressor NsrR (Salmonella choleraesuis (strain SC-B67)).